The chain runs to 141 residues: Nucleoside diphosphate kinase 1 (141 aa).

6 residues coordinate ATP: K11, F59, R87, T93, R104, and N114. The active-site Pros-phosphohistidine intermediate is H117.

The protein belongs to the NDK family. In terms of assembly, homotetramer. Mg(2+) is required as a cofactor.

Its subcellular location is the cytoplasm. It carries out the reaction a 2'-deoxyribonucleoside 5'-diphosphate + ATP = a 2'-deoxyribonucleoside 5'-triphosphate + ADP. It catalyses the reaction a ribonucleoside 5'-diphosphate + ATP = a ribonucleoside 5'-triphosphate + ADP. In terms of biological role, major role in the synthesis of nucleoside triphosphates other than ATP. The ATP gamma phosphate is transferred to the NDP beta phosphate via a ping-pong mechanism, using a phosphorylated active-site intermediate. This is Nucleoside diphosphate kinase 1 from Protochlamydia amoebophila (strain UWE25).